We begin with the raw amino-acid sequence, 725 residues long: Homeobox protein unc-62 (725 aa).

Positions 133–218 (SSDVCSSASF…PLDIVGDERA (86 aa)) constitute an MEIS N-terminal domain. Disordered regions lie at residues 214-258 (GDER…PYEP), 295-317 (SSSS…LHST), 329-359 (VSSP…GNSM), 386-419 (SLHQ…PPPQ), 491-555 (VKME…KRKV), and 615-661 (IDQN…PDPT). The span at 219–239 (SSSQPPMSPGSMGHHGHSGSP) shows a compositional bias: low complexity. The span at 388–400 (HQHHLHHPHHFPH) shows a compositional bias: basic residues. Positions 498 to 508 (SVSSSKSGGKK) are enriched in low complexity. A compositionally biased stretch (polar residues) spans 541 to 550 (LSDSANGSQN). Residues 552–614 (KRKVPKVFSK…NARRRIVQPM (63 aa)) constitute a DNA-binding region (homeobox; TALE-type).

This sequence belongs to the TALE/MEIS homeobox family.

The protein localises to the nucleus. Functionally, acts redundantly with ceh-20 and ceh-40 to perform overlapping roles during embryogenesis. Required for postembryonic development of the ectoderm, including the Q, V and P cell lineages, playing a crucial role in ensuring that these cells and their descendants undergo their invariant patterns of cell division, migration, fusion and morphogenesis. Has a role in the mig-13 pathway to promote anterior migration of neuroblasts in the Q lineage. Required for multiple roles in regulating vulva development. The sequence is that of Homeobox protein unc-62 (unc-62) from Caenorhabditis briggsae.